Consider the following 24-residue polypeptide: Xenoposin precursor fragment B2 (24 aa).

In terms of tissue distribution, expressed by the skin glands.

It localises to the secreted. Has antimicrobial activity against Gram-negative bacterium E.coli ATCC 25922 (MIC=100 uM), Gram-positive bacterium S.auerus ATCC 25923 (MIC=25 uM). The chain is Xenoposin precursor fragment B2 from Xenopus borealis (Kenyan clawed frog).